The sequence spans 323 residues: MPSTFESQLFFSRPFLSKRQIQRAQKNTISDYRNYNQKKLAVFKFLSDLCVQLKFPRKTLETAVYFYQRYHLFNRFETEVCYTVATSCLTLGCKEVETIKKTNDICTLSLRLRNVVKINTDILENFKKRVFQIELRILESCSFDYRVNNYVHIDEYVIKIGRELSFDYKLCNLAWVIAYDALKLETILVIPQHSIALAILKIAYELLDNKNWSSKRYSLFETDEKSVNEAYFDIVNFYINSFDMCDLQRHLPADLLPIGVERFMELKKNAGPESGLPQIPDHLLNADPYITITRDNNVQERRYVLSLELINGESSINSSTRHA.

This sequence belongs to the cyclin family. CTDK-I consists of three subunits, CTK1, CTK2 and CTK3 (also called alpha, beta and gamma). Interacts with CTK1. Heterodimerization with CTK3 is required to protect this subunit from degradation. Phosphorylated. Ubiquitinated. Phosphorylation and ubiquitination lead to degradation in growth-related way by the ubiquitin-proteasome pathway. Neither phosphorylation nor degradation requires association with CTK1.

Its subcellular location is the nucleus. The protein localises to the nucleolus. In terms of biological role, cyclin subunit of the CTDK-I complex, which hyperphosphorylates the C-terminal heptapeptide repeat domain (CTD) of the largest RNA polymerase II subunit. CTDK-I phosphorylates 'Ser-5' if the CTD substrate is not phosphorylated at 'Ser-5', but will phosphorylate 'Ser-2' of a CTD substrate if 'Ser-5' is already phosphorylated. CTDK-I is also more reactive toward substrates that are prephosphorylated at 'Ser-2' or 'Ser-5' compared with an unphosphorylated CTD substrate, therefore efficiently creating doubly phosphorylated CTD repeats. Involved in RNA polymerase II transcriptional elongation, and as part of the CTDK-I complex, pre-mRNA 3'-end processing and SET2 mediated H3K36 methylation. Together with CTK3, required for CTK1 CTD kinase activation. Required for DNA damage induced transcription. Involved in the adaptation to alternative carbon sources, including galactose, glycerol and ethanol, but not raffinose. Required for the integrity of the rDNA locus. The protein is CTD kinase subunit beta (CTK2) of Saccharomyces cerevisiae (strain ATCC 204508 / S288c) (Baker's yeast).